The chain runs to 242 residues: Probable transcriptional regulatory protein NMB1648 (242 aa).

This sequence belongs to the TACO1 family.

Its subcellular location is the cytoplasm. The polypeptide is Probable transcriptional regulatory protein NMB1648 (Neisseria meningitidis serogroup B (strain ATCC BAA-335 / MC58)).